Here is a 990-residue protein sequence, read N- to C-terminus: Translation initiation factor IF-2 (990 aa).

Positions 92 to 402 (KKRTFVKRDD…QRDEHLQAAP (311 aa)) are disordered. Low complexity-rich tracts occupy residues 104–116 (EGAA…AAFA) and 131–151 (EAPA…AAPA). The segment covering 158 to 201 (ELARREEQARHQAELIRRQEAELAAKRAAREAREKREREAEERA) has biased composition (basic and acidic residues). Positions 223–243 (TREQAAEATARNAAQLQARAK) are enriched in low complexity. The segment covering 244 to 264 (AAAESKARSDEEAARAADLDA) has biased composition (basic and acidic residues). Composition is skewed to low complexity over residues 281-290 (ATPKKAVMVA) and 318-342 (PAVG…PGAG). Composition is skewed to basic and acidic residues over residues 358–368 (PAKKKEIKTRG) and 386–398 (RRGD…DEHL). The tr-type G domain maps to 490–659 (PRAPVVTVMG…LLQADVMELK (170 aa)). Residues 499–506 (GHVDHGKT) form a G1 region. 499–506 (GHVDHGKT) contributes to the GTP binding site. The G2 stretch occupies residues 524–528 (GITQH). The tract at residues 545-548 (DTPG) is G3. GTP contacts are provided by residues 545–549 (DTPGH) and 599–602 (TKAD). The segment at 599 to 602 (TKAD) is G4. Positions 635–637 (SSK) are G5.

The protein belongs to the TRAFAC class translation factor GTPase superfamily. Classic translation factor GTPase family. IF-2 subfamily.

The protein resides in the cytoplasm. Functionally, one of the essential components for the initiation of protein synthesis. Protects formylmethionyl-tRNA from spontaneous hydrolysis and promotes its binding to the 30S ribosomal subunits. Also involved in the hydrolysis of GTP during the formation of the 70S ribosomal complex. The protein is Translation initiation factor IF-2 of Verminephrobacter eiseniae (strain EF01-2).